Consider the following 144-residue polypeptide: Ribosomal RNA large subunit methyltransferase H (144 aa).

Residues L63, G92, and L111–L116 each bind S-adenosyl-L-methionine.

Belongs to the RNA methyltransferase RlmH family. Homodimer.

The protein localises to the cytoplasm. It carries out the reaction pseudouridine(1915) in 23S rRNA + S-adenosyl-L-methionine = N(3)-methylpseudouridine(1915) in 23S rRNA + S-adenosyl-L-homocysteine + H(+). Its function is as follows. Specifically methylates the pseudouridine at position 1915 (m3Psi1915) in 23S rRNA. This is Ribosomal RNA large subunit methyltransferase H from Prochlorococcus marinus (strain MIT 9313).